Consider the following 239-residue polypeptide: Uridylate kinase (239 aa).

10–13 provides a ligand contact to ATP; that stretch reads KLSG. Gly53 contacts UMP. ATP contacts are provided by Gly54 and Arg58. Residues Asp73 and 135 to 142 contribute to the UMP site; that span reads TGRPYFTT. ATP-binding residues include Asn163, Tyr169, and Asp172.

It belongs to the UMP kinase family. In terms of assembly, homohexamer.

It localises to the cytoplasm. It carries out the reaction UMP + ATP = UDP + ADP. The protein operates within pyrimidine metabolism; CTP biosynthesis via de novo pathway; UDP from UMP (UMPK route): step 1/1. Inhibited by UTP. Catalyzes the reversible phosphorylation of UMP to UDP. The polypeptide is Uridylate kinase (Mycoplasmopsis synoviae (strain 53) (Mycoplasma synoviae)).